A 1182-amino-acid chain; its full sequence is Retrotransposable element SLACS 132 kDa protein (1182 aa).

Disordered stretches follow at residues 77-97 (GERS…PRER), 163-220 (DVLD…STDQ), 317-339 (RRKR…ALRL), and 418-478 (RTAR…STAP). Over residues 163–174 (DVLDEEEQDDDL) the composition is skewed to acidic residues. The span at 420 to 446 (ARREQQQQRGKDNQEEEDRQKKEEKSL) shows a compositional bias: basic and acidic residues. Residues 456–475 (SVRQGGQPSSSQPKRLNRWS) show a composition bias toward polar residues. In terms of domain architecture, Reverse transcriptase spans 560-790 (NADVSMEVGR…TGDTGFGTAV (231 aa)).

It carries out the reaction DNA(n) + a 2'-deoxyribonucleoside 5'-triphosphate = DNA(n+1) + diphosphate. The protein is Retrotransposable element SLACS 132 kDa protein of Trypanosoma brucei gambiense.